Reading from the N-terminus, the 465-residue chain is Sensor histidine kinase ZraS (465 aa).

Topologically, residues 1 to 14 (MSFIRLHKDAAATW) are cytoplasmic. The helical transmembrane segment at 15–35 (LSRLLPAAIFILVGLFSIMVI) threads the bilayer. The Periplasmic segment spans residues 36-202 (RDYGRESAAA…AATQAREWRN (167 aa)). Residues 203–223 (TLIVLSALAAVLLATLLAFFW) form a helical membrane-spanning segment. Residues 224–465 (HQRYQRSHRE…WLPVIARQQD (242 aa)) lie on the Cytoplasmic side of the membrane. In terms of domain architecture, Histidine kinase spans 253-461 (GVAHEIRNPL…VFTIWLPVIA (209 aa)). A Phosphohistidine; by autocatalysis modification is found at histidine 256.

In terms of processing, autophosphorylated.

The protein localises to the cell inner membrane. It carries out the reaction ATP + protein L-histidine = ADP + protein N-phospho-L-histidine.. With respect to regulation, activity of the ZraS/ZraR two-component system is repressed by the zinc-bound form of ZraP, which probably interacts with the periplasmic region of ZraS. Functionally, part of the Zra signaling pathway, an envelope stress response (ESR) system composed of the periplasmic accessory protein ZraP, the histidine kinase ZraS and the transcriptional regulator ZraR. The ZraPSR system contributes to antibiotic resistance and is important for membrane integrity in the presence of membrane-targeting biocides. ZraS is a member of the two-component regulatory system ZraS/ZraR. Functions as a membrane-associated sensor kinase that phosphorylates ZraR in response to high concentrations of Zn(2+) or Pb(2+) in the medium. This is Sensor histidine kinase ZraS from Salmonella typhimurium (strain LT2 / SGSC1412 / ATCC 700720).